The chain runs to 289 residues: Thioredoxin-like protein 1 (289 aa).

The Thioredoxin domain maps to 2–109; sequence VGVKPVGSDP…EEKIKQHLEN (108 aa). C34 and C37 are oxidised to a cystine. S113 bears the Phosphoserine mark. Residues 115-285 enclose the PITH domain; that stretch reads EDTDIPKGYM…NDFKRVVGKK (171 aa).

Component of the 19S regulatory cap of the 26S proteasome. Interacts with PSMD14/RPN11. Interacts with, and reduces EEF1A1. In terms of tissue distribution, ubiquitous.

Its subcellular location is the cytoplasm. It is found in the nucleus. Active thioredoxin with a redox potential of about -250 mV. This is Thioredoxin-like protein 1 (TXNL1) from Homo sapiens (Human).